Consider the following 421-residue polypeptide: NAD-specific glutamate dehydrogenase (421 aa).

Positions 70 and 94 each coordinate substrate. Lys-106 serves as the catalytic Proton donor. Residues Thr-191 and Asn-222 each contribute to the NAD(+) site. Residue Ser-355 participates in substrate binding.

The protein belongs to the Glu/Leu/Phe/Val dehydrogenases family. Homohexamer.

It catalyses the reaction L-glutamate + NAD(+) + H2O = 2-oxoglutarate + NH4(+) + NADH + H(+). It functions in the pathway amino-acid degradation; L-glutamate degradation via hydroxyglutarate pathway; crotonoyl-CoA from L-glutamate: step 1/5. The protein is NAD-specific glutamate dehydrogenase of Peptoniphilus asaccharolyticus (Peptostreptococcus asaccharolyticus).